A 72-amino-acid polypeptide reads, in one-letter code: Translation initiation factor IF-1 (72 aa).

The region spanning 1–72 (MAKEDSIEMQ…TKGRIVFRAR (72 aa)) is the S1-like domain.

This sequence belongs to the IF-1 family. In terms of assembly, component of the 30S ribosomal translation pre-initiation complex which assembles on the 30S ribosome in the order IF-2 and IF-3, IF-1 and N-formylmethionyl-tRNA(fMet); mRNA recruitment can occur at any time during PIC assembly.

The protein resides in the cytoplasm. One of the essential components for the initiation of protein synthesis. Stabilizes the binding of IF-2 and IF-3 on the 30S subunit to which N-formylmethionyl-tRNA(fMet) subsequently binds. Helps modulate mRNA selection, yielding the 30S pre-initiation complex (PIC). Upon addition of the 50S ribosomal subunit IF-1, IF-2 and IF-3 are released leaving the mature 70S translation initiation complex. The sequence is that of Translation initiation factor IF-1 from Shewanella amazonensis (strain ATCC BAA-1098 / SB2B).